The following is a 132-amino-acid chain: Dehydratase CTB10 (132 aa).

The EthD domain maps to 21–117 (PDQSEEDHHN…IPDHFNFADM (97 aa)).

This sequence belongs to the tpcK family.

Its pathway is mycotoxin biosynthesis. Its function is as follows. Dehydratase; part of the gene cluster that mediates the biosynthesis of cercosporin, a light-activated, non-host-selective toxin. The perylenequinone chromophore of cercosporin absorbs light energy to attain an electronically-activated triplet state and produces active oxygen species such as the hydroxyl radical, superoxide, hydrogen peroxide or singlet oxygen upon reaction with oxygen molecules. These reactive oxygen species cause damage to various cellular components including lipids, proteins and nucleic acids. The first step of cercosporin biosynthesis is performed by the polyketide synthase CTB1 which catalyzes the formation of nor-toralactone. The starter unit acyltransferase (SAT) domain of CTB1 initiates polyketide extension by the selective utilization of acetyl-CoA, which is elongated to the heptaketide in the beta-ketoacyl synthase (KS) domain by successive condensations with six malonyl units introduced by the malonyl acyltransferase (MAT) domain. The product template (PT) domain catalyzes C4-C9 and C2-C11 aldol cyclizations and dehydrations to a trihydroxynaphthalene, which is thought to be delivered to the thioesterase (TE) domain for product release. The bifunctional enzyme CTB3 then methylates nor-toralactone to toralactone before conducting an unusual oxidative aromatic ring opening. The O-methyltransferase CTB2 further methylates the nascent OH-6 of the CBT3 product, blocking further oxidation at this site before the reductase CTB6 reduces the 2-oxopropyl ketone at position C7, giving naphthalene. The FAD-dependent monooxygenase CTB5 in concert with the multicopper oxidase CTB12 are responsible for homodimerization of naphthalene with CTB7 installing the dioxepine moiety, finally producing cercosporin. The fasciclin domain-containing protein CTB11 might act with CTB5 and CTB12 whereas the roles of CTB9 and CTB10 have still to be elucidated. The protein is Dehydratase CTB10 of Cercospora beticola (Sugarbeet leaf spot fungus).